The chain runs to 95 residues: Scorpine-like peptide Smp76 (95 aa).

An N-terminal signal peptide occupies residues 1–19 (MNCKLTALLFLGLIVIASC). Residues 55-95 (EFQCVANVDTLGNCKKHCAKTTGEKGYCHGTKCKCGIELSY) form the BetaSPN-type CS-alpha/beta domain. 3 cysteine pairs are disulfide-bonded: Cys58-Cys82, Cys68-Cys87, and Cys72-Cys89.

Disulfide bonds are critical for antiviral function, and their disruption inhibit viral activity. As to expression, expressed by the venom gland.

It is found in the secreted. Functionally, antibacterial peptide. Dose-dependently inhibits Dengue virus (DENV), Zika virus (ZIKV) and Hepatitis C virus (HCV) infections. Two mechanisms of action have been described by two different groups: one involving activity on extracellular particles, and the other regulating the immune system. On Dengue virus (DENV), Zika virus (ZIKV), suppress the established viral infection, similar to the effect of interferon (IFN)-beta. Mechanistically, upregulates the expression of IFN-beta by activating interferon regulatory transcription factor 3 (IRF3) phosphorylation. On HCV and DENV, acts by inactivating extra-cellular infectious particles without affecting viral replication. Shows very weak inhibition on measles virus. Is neither toxic nor hemolytic in vitro at high concentrations. The polypeptide is Scorpine-like peptide Smp76 (Scorpio palmatus (Israeli golden scorpion)).